Consider the following 296-residue polypeptide: tRNA U34 carboxymethyltransferase (296 aa).

Carboxy-S-adenosyl-L-methionine is bound by residues K64, W78, K83, G102, 124–126, 151–152, Y171, and R286; these read DPS and VE.

This sequence belongs to the class I-like SAM-binding methyltransferase superfamily. CmoB family. Homotetramer.

It catalyses the reaction carboxy-S-adenosyl-L-methionine + 5-hydroxyuridine(34) in tRNA = 5-carboxymethoxyuridine(34) in tRNA + S-adenosyl-L-homocysteine + H(+). Its function is as follows. Catalyzes carboxymethyl transfer from carboxy-S-adenosyl-L-methionine (Cx-SAM) to 5-hydroxyuridine (ho5U) to form 5-carboxymethoxyuridine (cmo5U) at position 34 in tRNAs. This Sulfurimonas denitrificans (strain ATCC 33889 / DSM 1251) (Thiomicrospira denitrificans (strain ATCC 33889 / DSM 1251)) protein is tRNA U34 carboxymethyltransferase.